The sequence spans 432 residues: Glutamyl-tRNA reductase (432 aa).

Residues 49–52 (TCNR), Ser107, 112–114 (ETQ), and Gln118 each bind substrate. Catalysis depends on Cys50, which acts as the Nucleophile. Position 186–191 (186–191 (GAGEMG)) interacts with NADP(+).

Belongs to the glutamyl-tRNA reductase family. As to quaternary structure, homodimer.

The catalysed reaction is (S)-4-amino-5-oxopentanoate + tRNA(Glu) + NADP(+) = L-glutamyl-tRNA(Glu) + NADPH + H(+). It functions in the pathway porphyrin-containing compound metabolism; protoporphyrin-IX biosynthesis; 5-aminolevulinate from L-glutamyl-tRNA(Glu): step 1/2. Catalyzes the NADPH-dependent reduction of glutamyl-tRNA(Glu) to glutamate 1-semialdehyde (GSA). The sequence is that of Glutamyl-tRNA reductase from Campylobacter jejuni subsp. jejuni serotype O:2 (strain ATCC 700819 / NCTC 11168).